A 542-amino-acid chain; its full sequence is Endonuclease 4 homolog (542 aa).

Disordered regions lie at residues 89–123 and 141–234; these read NEEI…QTSI and PFFS…ENKF. 2 stretches are compositionally biased toward low complexity: residues 99 to 115 and 147 to 170; these read SKKL…QQSK and NNAS…TTTT. Residues 171 to 206 adopt a coiled-coil conformation; sequence TKKRNNKDEENEDDNEEEEEEEEEEEDKKSKKKTTT. Over residues 179–196 the composition is skewed to acidic residues; it reads EENEDDNEEEEEEEEEEE. Residues 205-215 are compositionally biased toward low complexity; it reads TTTTTTTTTTA. The span at 216 to 227 shows a compositional bias: basic residues; sequence YKKKSSPKKKKV. The Nuclear localization signal motif lies at 222–227; sequence PKKKKV. Zn(2+)-binding residues include histidine 328, histidine 368, glutamate 404, aspartate 438, histidine 441, histidine 475, aspartate 488, histidine 490, and glutamate 520.

The protein belongs to the AP endonuclease 2 family. Zn(2+) is required as a cofactor.

It is found in the nucleus. The enzyme catalyses Endonucleolytic cleavage to 5'-phosphooligonucleotide end-products.. Plays a role in DNA repair. It cleaves phosphodiester bonds at apurinic or apyrimidinic sites (AP sites) to produce new 5'-ends that are base-free deoxyribose 5-phosphate residues. This Dictyostelium discoideum (Social amoeba) protein is Endonuclease 4 homolog (apnA).